A 303-amino-acid polypeptide reads, in one-letter code: D-alanine--D-alanine ligase (303 aa).

The ATP-grasp domain maps to 102 to 298 (RILLAAAGLP…YPELCDWMVR (197 aa)). 128 to 181 (PLPAPYVIKPVAEGSSVGVEIVRTGDNRRAEIARTWRFGKEALVESFIPGRELT) is an ATP binding site. Mg(2+) is bound by residues Asp251, Glu265, and Asn267.

The protein belongs to the D-alanine--D-alanine ligase family. The cofactor is Mg(2+). It depends on Mn(2+) as a cofactor.

It localises to the cytoplasm. The enzyme catalyses 2 D-alanine + ATP = D-alanyl-D-alanine + ADP + phosphate + H(+). The protein operates within cell wall biogenesis; peptidoglycan biosynthesis. Its function is as follows. Cell wall formation. The protein is D-alanine--D-alanine ligase of Gluconobacter oxydans (strain 621H) (Gluconobacter suboxydans).